The sequence spans 209 residues: Small ribosomal subunit protein uS4 (209 aa).

Over residues 1–13 the composition is skewed to basic residues; the sequence is MSTKSRTRSKTRL. Disordered regions lie at residues 1 to 20 and 28 to 49; these read MSTKSRTRSKTRLSRALGIP and YLEKRPYAPGEHGRSKRKQDSD. In terms of domain architecture, S4 RNA-binding spans 95 to 176; it reads QRLDALVVRS…PKLPSYLEVE (82 aa).

The protein belongs to the universal ribosomal protein uS4 family. Part of the 30S ribosomal subunit. Contacts protein S5. The interaction surface between S4 and S5 is involved in control of translational fidelity.

One of the primary rRNA binding proteins, it binds directly to 16S rRNA where it nucleates assembly of the body of the 30S subunit. In terms of biological role, with S5 and S12 plays an important role in translational accuracy. The protein is Small ribosomal subunit protein uS4 of Clavibacter michiganensis subsp. michiganensis (strain NCPPB 382).